The following is a 538-amino-acid chain: MVFAMLVVCWSIFLGLWMLVSRLKQSRDKICPPKGPPRLPWIGNLHQFPLKLLHLRLTEWSRTYGGFYTLKLGPVTAAVITDRQIAKEAFDRNSAISSTRHTNYATEFVTDGTHLLTMKYGALWREERKILQQTLKGSVCDNDHMRLIDAEQTQLMRDLLVNPSDYSAYIKRASTSIITSLVFGIRTPSCATLHLQELDAINDDWLQLLVIGGALSEDVFPVLKYIPSAFLGTFTKRLKGIRRRMRRLYGTMLNQTITRQRESPAPPARSMIDAVLNQREHFNLTDRQIEVLAGVTLEGGFDTTTSMLLVFVQAMTLHPECQERAYVEINALCGRHRIPQWSDRNQLPYVNMLLKETMRWRPVTTLSPPHVLEKDTTIRGTFLPQGSMLILNTWGLHQDPNVFIDPDRFDPMRYEGYTKLAADYANAPDAATRDHYTYGIGRRICPGIHLADRSMFLAIAKLIWGFRFEPQRDEQGNSIPIDSNPVTGYTVDKVQISPKPFACAVIPRDKEGEKTILREFGVASEVFADYNLDENASL.

Residues 2 to 21 (VFAMLVVCWSIFLGLWMLVS) form a helical membrane-spanning segment. Residue cysteine 445 participates in heme binding.

Belongs to the cytochrome P450 family. The cofactor is heme.

The protein resides in the membrane. The protein operates within secondary metabolite biosynthesis; terpenoid biosynthesis. It participates in mycotoxin biosynthesis. Functionally, cytochrome P450 monooxygenase; part of the gene cluster that mediates the biosynthesis of the neurotoxin verrucosidin, a methylated alpha-pyrone polyketide that inhibits oxidative phosphorylation in mitochondria and thereby causes neurological diseases. The carbon backbone of verrucosidin is synthesized by the HR-PKS verA, and further modified by the other verrucodidin cluster enzymes. The chain is Cytochrome P450 monooxygenase verH from Penicillium polonicum.